Reading from the N-terminus, the 289-residue chain is Digeranylgeranylglyceryl phosphate synthase (289 aa).

8 helical membrane passes run 18-38, 47-67, 99-119, 120-140, 163-183, 218-238, 243-263, and 269-289; these read LMAGFAAAIGTLIAFNILISG, AFPFLDAGLVFLVVFLVSGAG, FYFSYLLFALGTLIAFSINSI, CGSIALFNSLLLILYAKTLKG, IFGFGGIKALSVLFLLAALAI, LAVLTGLLAVILSPLPYFMSV, YIYLVSLADLGFLAAIIQLLV, and KSSKLFKIAMFFALIAFIAGV.

The protein belongs to the UbiA prenyltransferase family. DGGGP synthase subfamily. Mg(2+) serves as cofactor.

It is found in the cell membrane. It catalyses the reaction sn-3-O-(geranylgeranyl)glycerol 1-phosphate + (2E,6E,10E)-geranylgeranyl diphosphate = 2,3-bis-O-(geranylgeranyl)-sn-glycerol 1-phosphate + diphosphate. It participates in membrane lipid metabolism; glycerophospholipid metabolism. Its function is as follows. Prenyltransferase that catalyzes the transfer of the geranylgeranyl moiety of geranylgeranyl diphosphate (GGPP) to the C2 hydroxyl of (S)-3-O-geranylgeranylglyceryl phosphate (GGGP). This reaction is the second ether-bond-formation step in the biosynthesis of archaeal membrane lipids. This Methanosarcina mazei (strain ATCC BAA-159 / DSM 3647 / Goe1 / Go1 / JCM 11833 / OCM 88) (Methanosarcina frisia) protein is Digeranylgeranylglyceryl phosphate synthase.